We begin with the raw amino-acid sequence, 98 residues long: NADH-ubiquinone oxidoreductase chain 4L (98 aa).

The next 3 membrane-spanning stretches (helical) occupy residues 1 to 21 (MSVV…GLLV), 30 to 50 (LLCL…TVLT), and 61 to 81 (IILL…LVMI).

Belongs to the complex I subunit 4L family. As to quaternary structure, core subunit of respiratory chain NADH dehydrogenase (Complex I) which is composed of 45 different subunits.

It is found in the mitochondrion inner membrane. The catalysed reaction is a ubiquinone + NADH + 5 H(+)(in) = a ubiquinol + NAD(+) + 4 H(+)(out). Core subunit of the mitochondrial membrane respiratory chain NADH dehydrogenase (Complex I) which catalyzes electron transfer from NADH through the respiratory chain, using ubiquinone as an electron acceptor. Part of the enzyme membrane arm which is embedded in the lipid bilayer and involved in proton translocation. The sequence is that of NADH-ubiquinone oxidoreductase chain 4L (MT-ND4L) from Lontra canadensis (North American river otter).